Here is a 336-residue protein sequence, read N- to C-terminus: Glyceraldehyde-3-phosphate dehydrogenase 1 (336 aa).

Residues 12–13 (RI), Asp-34, and Ser-120 contribute to the NAD(+) site. D-glyceraldehyde 3-phosphate-binding positions include 150-152 (SCT), Thr-181, Arg-198, 211-212 (TG), and Arg-234. Cys-151 (nucleophile) is an active-site residue. An NAD(+)-binding site is contributed by Asn-316.

This sequence belongs to the glyceraldehyde-3-phosphate dehydrogenase family. Homotetramer.

The protein localises to the cytoplasm. The enzyme catalyses D-glyceraldehyde 3-phosphate + phosphate + NAD(+) = (2R)-3-phospho-glyceroyl phosphate + NADH + H(+). It participates in carbohydrate degradation; glycolysis; pyruvate from D-glyceraldehyde 3-phosphate: step 1/5. Its function is as follows. Catalyzes the oxidative phosphorylation of glyceraldehyde 3-phosphate (G3P) to 1,3-bisphosphoglycerate (BPG) using the cofactor NAD. The first reaction step involves the formation of a hemiacetal intermediate between G3P and a cysteine residue, and this hemiacetal intermediate is then oxidized to a thioester, with concomitant reduction of NAD to NADH. The reduced NADH is then exchanged with the second NAD, and the thioester is attacked by a nucleophilic inorganic phosphate to produce BPG. The sequence is that of Glyceraldehyde-3-phosphate dehydrogenase 1 (gapA1) from Staphylococcus epidermidis (strain ATCC 35984 / DSM 28319 / BCRC 17069 / CCUG 31568 / BM 3577 / RP62A).